Reading from the N-terminus, the 263-residue chain is Hydroxyethylthiazole kinase (263 aa).

Met45 contacts substrate. ATP contacts are provided by Arg121 and Ser167. Gly194 is a substrate binding site.

Belongs to the Thz kinase family. The cofactor is Mg(2+).

It catalyses the reaction 5-(2-hydroxyethyl)-4-methylthiazole + ATP = 4-methyl-5-(2-phosphooxyethyl)-thiazole + ADP + H(+). It participates in cofactor biosynthesis; thiamine diphosphate biosynthesis; 4-methyl-5-(2-phosphoethyl)-thiazole from 5-(2-hydroxyethyl)-4-methylthiazole: step 1/1. In terms of biological role, catalyzes the phosphorylation of the hydroxyl group of 4-methyl-5-beta-hydroxyethylthiazole (THZ). In Vibrio campbellii (strain ATCC BAA-1116), this protein is Hydroxyethylthiazole kinase.